The chain runs to 1678 residues: Nuclear pore complex protein Nup98-Nup96 (1678 aa).

A compositionally biased stretch (low complexity) spans 1–11 (MFGQNKSFGSS). Disordered stretches follow at residues 1-41 (MFGQ…QPAN), 68-100 (SSIF…FGST), 301-366 (TTGS…GAPA), 441-473 (FGNT…TQAT), and 603-631 (SKEA…RSVH). Positions 12 to 22 (SFGGGSSGSGL) are enriched in gly residues. Low complexity-rich tracts occupy residues 23 to 38 (FGQN…LFGQ) and 73 to 83 (SPQQPQNNQSS). The span at 306–329 (LFGNQQPQTNTGGSLFGNTQNQNQ) shows a compositional bias: polar residues. The span at 345–366 (FGQAQQQPQQQSSGFSFGGAPA) shows a compositional bias: low complexity. 2 stretches are compositionally biased toward polar residues: residues 456 to 473 (SQPQ…TQAT) and 615 to 628 (RNST…LTNR). In terms of domain architecture, Peptidase S59 spans 777-919 (KPDYFSLPTI…GSWVFRVDHF (143 aa)). The active-site Nucleophile is Ser-920.

It belongs to the nucleoporin GLFG family. As to quaternary structure, part of the NPC. In terms of processing, the Nup98 and Nup96 chains are autoproteolytically processed from a single precursor protein.

It is found in the cytoplasmic granule. Its subcellular location is the nucleus membrane. It localises to the nucleus. The protein localises to the nuclear pore complex. The protein resides in the nucleus envelope. It is found in the chromosome. Its function is as follows. Nup98 and Nup96 play a role in the bidirectional transport across the nucleoporin complex (NPC). Required for the nuclear import of hcp-4 during mitotic prophase, this step is essential for centrosome assembly and resolution. Regulates nucleoporin npp-5 localization to the nuclear membrane during interphase and to kinetochores during metaphase. Has a role in P granule integrity; may promote the 'liquid phase' of P granules by increasing the number of interacting RNA-protein complexes. Binds nos-2 mRNA, probably indirectly, and promotes its accumulation in P granules. The polypeptide is Nuclear pore complex protein Nup98-Nup96 (Caenorhabditis elegans).